Reading from the N-terminus, the 406-residue chain is E3 ubiquitin-protein ligase RING1 (406 aa).

Threonine 24 is modified (phosphothreonine). Residues 30–234 (MDGTEIAVSP…GGAGSEDSGD (205 aa)) form a necessary for transcriptional repression region. A Phosphoserine modification is found at serine 38. The RING-type zinc-finger motif lies at 48–88 (CPICLDMLKNTMTTKECLHRFCSDCIVTALRSGNKECPTCR). 3 positions are modified to phosphoserine: serine 140, serine 187, and serine 190. Disordered regions lie at residues 148-263 (QAMH…GEIE) and 309-354 (QQQE…PSLE). Acidic residues predominate over residues 175-187 (EPGEGEGDGEDVS). The short motif at 201-204 (KRPR) is the Nuclear localization signal element. Gly residues predominate over residues 205 to 228 (GGGAGGSSVGTGGGGTGGVGGGAG). Phosphothreonine is present on residues threonine 215 and threonine 220. Residues serine 229 and serine 232 each carry the phosphoserine modification. The segment at 230 to 406 (EDSGDRGGTL…LCYAPTKDPK (177 aa)) is necessary for interaction with CBX2. Over residues 235–244 (RGGTLGGGTL) the composition is skewed to gly residues. Over residues 246–258 (PPSPPGAPSPPEP) the composition is skewed to pro residues. Phosphoserine occurs at positions 248 and 254. The span at 315–343 (EPGGPGGGASDTGGPDGCGGEGGGAGGGD) shows a compositional bias: gly residues.

As to quaternary structure, component of chromatin-associated Polycomb (PcG) complexes. Interacts with BMI1. Part of the E2F6.com-1 complex in G0 phase composed of E2F6, MGA, MAX, TFDP1, CBX3, BAT8, EUHMTASE1, RING1, RNF2/RING2 MBLR, L3MBTL2 and YAF2. Interacts with CBX2 and PCGF6. Component of a PRC1-like complex. Component of repressive BCOR complex containing Polycomb group subcomplex at least composed of RYBP, PCGF1, BCOR and RNF2/RING2. Interacts with PCGF2, RNF2; CBX6, CBX7 and CBX8. Interacts with PHC2. Interacts with MN1. Interacts with USP26.

The protein localises to the nucleus. It localises to the nucleus speckle. It carries out the reaction S-ubiquitinyl-[E2 ubiquitin-conjugating enzyme]-L-cysteine + [acceptor protein]-L-lysine = [E2 ubiquitin-conjugating enzyme]-L-cysteine + N(6)-ubiquitinyl-[acceptor protein]-L-lysine.. The protein operates within protein modification; protein ubiquitination. Its function is as follows. Constitutes one of the E3 ubiquitin-protein ligases that mediate monoubiquitination of 'Lys-119' of histone H2A, thereby playing a central role in histone code and gene regulation. H2A 'Lys-119' ubiquitination gives a specific tag for epigenetic transcriptional repression and participates in X chromosome inactivation of female mammals. Essential component of a Polycomb group (PcG) multiprotein PRC1-like complex, a complex class required to maintain the transcriptionally repressive state of many genes, including Hox genes, throughout development. PcG PRC1 complex acts via chromatin remodeling and modification of histones, rendering chromatin heritably changed in its expressibility. Compared to RNF2/RING2, it does not have the main E3 ubiquitin ligase activity on histone H2A, and it may rather act as a modulator of RNF2/RING2 activity. The chain is E3 ubiquitin-protein ligase RING1 from Homo sapiens (Human).